Reading from the N-terminus, the 508-residue chain is Lysine--tRNA ligase (508 aa).

2 residues coordinate Mg(2+): E418 and E425.

It belongs to the class-II aminoacyl-tRNA synthetase family. As to quaternary structure, homodimer. Mg(2+) serves as cofactor.

It localises to the cytoplasm. The enzyme catalyses tRNA(Lys) + L-lysine + ATP = L-lysyl-tRNA(Lys) + AMP + diphosphate. This chain is Lysine--tRNA ligase, found in Burkholderia cenocepacia (strain HI2424).